Here is a 448-residue protein sequence, read N- to C-terminus: Histidinol dehydrogenase (448 aa).

Residues Tyr136, Gln197, and Asn220 each coordinate NAD(+). Positions 243, 265, and 268 each coordinate substrate. The Zn(2+) site is built by Gln265 and His268. Residues Glu333 and His334 each act as proton acceptor in the active site. Residues His334, Asp367, Glu421, and His426 each coordinate substrate. Asp367 serves as a coordination point for Zn(2+). His426 contributes to the Zn(2+) binding site.

Belongs to the histidinol dehydrogenase family. Zn(2+) serves as cofactor.

The catalysed reaction is L-histidinol + 2 NAD(+) + H2O = L-histidine + 2 NADH + 3 H(+). The protein operates within amino-acid biosynthesis; L-histidine biosynthesis; L-histidine from 5-phospho-alpha-D-ribose 1-diphosphate: step 9/9. In terms of biological role, catalyzes the sequential NAD-dependent oxidations of L-histidinol to L-histidinaldehyde and then to L-histidine. The protein is Histidinol dehydrogenase of Pseudomonas syringae pv. tomato (strain ATCC BAA-871 / DC3000).